Consider the following 437-residue polypeptide: UDP-N-acetylmuramoylalanine--D-glutamate ligase (437 aa).

112 to 118 (GSNGKST) lines the ATP pocket.

This sequence belongs to the MurCDEF family.

It localises to the cytoplasm. The enzyme catalyses UDP-N-acetyl-alpha-D-muramoyl-L-alanine + D-glutamate + ATP = UDP-N-acetyl-alpha-D-muramoyl-L-alanyl-D-glutamate + ADP + phosphate + H(+). Its pathway is cell wall biogenesis; peptidoglycan biosynthesis. Functionally, cell wall formation. Catalyzes the addition of glutamate to the nucleotide precursor UDP-N-acetylmuramoyl-L-alanine (UMA). The chain is UDP-N-acetylmuramoylalanine--D-glutamate ligase from Haemophilus influenzae (strain 86-028NP).